A 163-amino-acid polypeptide reads, in one-letter code: Glutathione peroxidase-like peroxiredoxin HYR1 (163 aa).

Cysteine 36 acts as the Cysteine sulfenic acid (-SOH) intermediate in catalysis. Cysteine 36 and cysteine 82 form a disulfide bridge.

This sequence belongs to the glutathione peroxidase family. In terms of assembly, interacts with YAP1 and probably YBP1.

The protein resides in the cytoplasm. It is found in the mitochondrion intermembrane space. It localises to the peroxisome matrix. It carries out the reaction a hydroperoxide + [thioredoxin]-dithiol = an alcohol + [thioredoxin]-disulfide + H2O. Involved in oxidative stress response and redox homeostasis. Functions as a sensor and transducer of hydroperoxide stress. In response to hydroperoxide stress it oxidizes (activates) the transcription activator YAP1, which is involved in transcription activation of genes of the oxidative stress response pathway. May also play a direct role in hydroperoxide scavenging, being the most active of three closely related S.cerevisiae peroxiredoxins (GPX1, GPX2, and HYR1/GPX3) with respect to peroxide and lipid hydroperoxide reduction. The three enzymes are not required for the glutaredoxin-mediated antioxidant function. In the presence of peroxides, HYR1/GPX3 is directly oxidized at Cys-36 to form a cysteine sulfenic acid (-SOH). Cys-36-SOH then forms either an intramolecular disulfide bond (Cys-36 with Cys-82) or a transient, intermolecular disulfide bond with 'Cys-598' of YAP1, which is further resolved into a YAP1 intramolecular disulfide bond ('Cys-303' with 'Cys-598'), which causes its nuclear accumulation and activation, and a reduced Cys-36 in HYR1/GPX3. The sequence is that of Glutathione peroxidase-like peroxiredoxin HYR1 from Saccharomyces cerevisiae (strain ATCC 204508 / S288c) (Baker's yeast).